The following is a 224-amino-acid chain: MSNPIYLALDLPRLDAAVALAQKVKGHVGGLKLGLEFFCAHGHHGVHEVAKVGLPIFLDLKLHDIPNTVAGAMQSIHVLEPAIVTIHAGGGRAMMEDAKAAAGEHTKVVAVTVLTSLDDADMSTMGVGGSAYDQAIRLADLAQEAGLDGIVCSGHEVGAIHKRWKNGFFVVPGLRPAEGKLGDQKRAVTPRAARDAGASVLVIGRPISRAEDPVAAARAIEATL.

Residues Asp-10, Lys-32, 59–68, Thr-115, Arg-175, Gln-184, Gly-204, and Arg-205 contribute to the substrate site; that span reads DLKLHDIPNT. Lys-61 functions as the Proton donor in the catalytic mechanism.

This sequence belongs to the OMP decarboxylase family. Type 1 subfamily. Homodimer.

It catalyses the reaction orotidine 5'-phosphate + H(+) = UMP + CO2. Its pathway is pyrimidine metabolism; UMP biosynthesis via de novo pathway; UMP from orotate: step 2/2. In terms of biological role, catalyzes the decarboxylation of orotidine 5'-monophosphate (OMP) to uridine 5'-monophosphate (UMP). This is Orotidine 5'-phosphate decarboxylase from Novosphingobium aromaticivorans (strain ATCC 700278 / DSM 12444 / CCUG 56034 / CIP 105152 / NBRC 16084 / F199).